Reading from the N-terminus, the 392-residue chain is Chorismate synthase (392 aa).

Residues Arg39 and Arg45 each contribute to the NADP(+) site. FMN is bound by residues 128-130 (RSS), 248-249 (QA), Gly300, 315-319 (KPIPT), and Arg341.

This sequence belongs to the chorismate synthase family. In terms of assembly, homotetramer. Requires FMNH2 as cofactor.

The catalysed reaction is 5-O-(1-carboxyvinyl)-3-phosphoshikimate = chorismate + phosphate. Its pathway is metabolic intermediate biosynthesis; chorismate biosynthesis; chorismate from D-erythrose 4-phosphate and phosphoenolpyruvate: step 7/7. Catalyzes the anti-1,4-elimination of the C-3 phosphate and the C-6 proR hydrogen from 5-enolpyruvylshikimate-3-phosphate (EPSP) to yield chorismate, which is the branch point compound that serves as the starting substrate for the three terminal pathways of aromatic amino acid biosynthesis. This reaction introduces a second double bond into the aromatic ring system. The protein is Chorismate synthase of Trichlorobacter lovleyi (strain ATCC BAA-1151 / DSM 17278 / SZ) (Geobacter lovleyi).